The sequence spans 209 residues: Large ribosomal subunit protein uL3 (209 aa).

The interval 122–151 (AIKRHGQSRGPMSHGSRYHRRPGSMGPVDP) is disordered.

It belongs to the universal ribosomal protein uL3 family. In terms of assembly, part of the 50S ribosomal subunit. Forms a cluster with proteins L14 and L19.

Functionally, one of the primary rRNA binding proteins, it binds directly near the 3'-end of the 23S rRNA, where it nucleates assembly of the 50S subunit. The chain is Large ribosomal subunit protein uL3 from Bacillus velezensis (strain DSM 23117 / BGSC 10A6 / LMG 26770 / FZB42) (Bacillus amyloliquefaciens subsp. plantarum).